The primary structure comprises 379 residues: Stimulator of interferon genes protein (379 aa).

At 1-23 the chain is on the cytoplasmic side; that stretch reads MPQDPSTRSSPARLLIPEPRAGR. Residues 24–40 traverse the membrane as a helical segment; sequence ARHAACVLLAVCFVVLF. Residues 41 to 50 lie on the Lumenal side of the membrane; that stretch reads LSGEPLAPII. Residues 51 to 75 traverse the membrane as a helical segment; it reads RSVCTQLAALQLGVLLKGCCCLAEE. The Cytoplasmic portion of the chain corresponds to 76 to 97; the sequence is IFHLHSRHHGSLWQVLCSCFPP. Residues 98 to 111 form a helical membrane-spanning segment; the sequence is RWYLALLLVGGSAY. The Lumenal portion of the chain corresponds to 112 to 121; the sequence is LDPPEDNGHS. Residues 122-139 traverse the membrane as a helical segment; the sequence is PRLALTLSCLCQLLVLAL. The Cytoplasmic segment spans residues 140–379; sequence GLQKLSAVEV…LPQPLRSDCP (240 aa). The cyclic dinucleotide-binding domain (CBD) stretch occupies residues 158-345; the sequence is KNVAHGLAWS…WHLQQQQREE (188 aa). 3',3'-c-di-GMP is bound by residues Ser-167, Tyr-172, 243 to 246, and Ser-268; that span reads RVYK. Residues 167–172, 243–246, and Ser-268 contribute to the 2',3'-cGAMP site; these read SYYIGY and RVYK. Positions 363 to 366 match the pLxIS motif motif; that stretch reads LQVS. Residue Ser-366 is modified to Phosphoserine; by TBK1.

Belongs to the STING family. In terms of assembly, homodimer; forms a homodimer in absence of cyclic nucleotide (c-di-GMP or cGAMP). Homotetramer; in presence of cyclic nucleotide (c-di-GMP or cGAMP), forms tetramers and higher-order oligomers through side-by-side packing. Interacts (when phosphorylated) with IRF3; following activation and phosphorylation on the pLxIS motif by TBK1, recruits IRF3. Post-translationally, phosphorylation by TBK1 leads to activation and production of IFN-beta. Following cyclic nucleotide (c-di-GMP or cGAMP)-binding, activation and translocation from the endoplasmic reticulum, STING1 is phosphorylated by TBK1 at Ser-366 in the pLxIS motif. The phosphorylated pLxIS motif constitutes an IRF3-binding motif, leading to recruitment of the transcription factor IRF3 to induce type-I interferons and other cytokines.

It localises to the endoplasmic reticulum membrane. The protein resides in the cytoplasm. The protein localises to the perinuclear region. Its subcellular location is the endoplasmic reticulum-Golgi intermediate compartment membrane. It is found in the golgi apparatus membrane. It localises to the cytoplasmic vesicle. The protein resides in the autophagosome membrane. It carries out the reaction H(+)(in) = H(+)(out). Facilitator of innate immune signaling that acts as a sensor of cytosolic DNA from bacteria and viruses and promotes the production of type I interferon (IFN-alpha and IFN-beta). Innate immune response is triggered in response to non-CpG double-stranded DNA from viruses and bacteria delivered to the cytoplasm. Acts by binding cyclic dinucleotides: recognizes and binds cyclic di-GMP (c-di-GMP), a second messenger produced by bacteria, and cyclic GMP-AMP (cGAMP), a messenger produced by CGAS in response to DNA virus in the cytosol. Upon binding of c-di-GMP or cGAMP, STING1 oligomerizes and is able to activate both NF-kappa-B and IRF3 transcription pathways to induce expression of type I interferon and exert a potent anti-viral state. Exhibits 2',3' phosphodiester linkage-specific ligand recognition: can bind both 2'-3' linked cGAMP and 3'-3' linked cGAMP but is preferentially activated by 2'-3' linked cGAMP. In addition to promote the production of type I interferons, plays a direct role in autophagy. Following cGAMP-binding, STING1 buds from the endoplasmic reticulum into COPII vesicles, which then form the endoplasmic reticulum-Golgi intermediate compartment (ERGIC). The ERGIC serves as the membrane source for LC3 lipidation, leading to formation of autophagosomes that target cytosolic DNA or DNA viruses for degradation by the lysosome. Promotes autophagy by acting as a proton channel that directs proton efflux from the Golgi to facilitate LC3 lipidation. The autophagy- and interferon-inducing activities can be uncoupled and autophagy induction is independent of TBK1 phosphorylation. The polypeptide is Stimulator of interferon genes protein (Gallus gallus (Chicken)).